The sequence spans 423 residues: Protein phosphatase 2C 77 (423 aa).

Residues 74-95 are disordered; sequence GDEINGSDEFDPRSMNQSEKKV. Residues 112 to 411 enclose the PPM-type phosphatase domain; that stretch reads LYGVTSICGR…DNISVVVVDL (300 aa). Residues D165, D251, and S252 each contribute to the Mg(2+) site. The cysteines at positions 257 and 331 are disulfide-linked. Mg(2+) contacts are provided by D337 and D402.

This sequence belongs to the PP2C family. Interacts with SPK1, CIPK15/PKS3, GPX3, SCAR1, SCAR2, SCAR3 and SCARL. Also interacts with CIPK24/SOS2. Binds to the fibrillin precursor protein. Interacts with ABA-bounded PYR1, PYL1, PYL2, PYL3, PYL4, PYL5, PYL6, PYL8 and PYL9, and with free PYL2, PYL3 and PYL4. Interacts with and represses GHR1, and, to a lesser extent, SRK2E/OST1. Mg(2+) serves as cofactor. It depends on Mn(2+) as a cofactor.

The enzyme catalyses O-phospho-L-seryl-[protein] + H2O = L-seryl-[protein] + phosphate. It catalyses the reaction O-phospho-L-threonyl-[protein] + H2O = L-threonyl-[protein] + phosphate. Its activity is regulated as follows. Phosphatase activity repressed by oxidized ATGPX3, free fatty acids (e.g. arachidonic acid (20:4) and Linolenic acid (18:3)) and by H(2)O(2). Repressed by PYR/PYL/RCAR ABA receptors in an ABA-dependent manner. In terms of biological role, repressor of the abscisic acid (ABA) signaling pathway that regulates numerous ABA responses, such as stomatal closure, osmotic water permeability of the plasma membrane (Pos), high light stress, response to glucose, seed germination and inhibition of vegetative growth. During the stomatal closure regulation, modulates the inward calcium-channel permeability as well as H(2)O(2) and oxidative burst in response to ABA and dehydration. Represses GHR1 and, to some extent, SRK2E/OST1, kinases involved in the regulation of SLAC1-dependent stomatal closure. Controls negatively fibrillin that is involved in mediating ABA-induced photoprotection. May be implicated in ABA content regulation. Involved in acquired thermotolerance of root growth and seedling survival. Required for the Erwinia amylovora harpin-induced (HrpN) drought tolerance. Involved in the hydrotropic response. The sequence is that of Protein phosphatase 2C 77 from Arabidopsis thaliana (Mouse-ear cress).